Consider the following 238-residue polypeptide: Histone H1 (238 aa).

2 stretches are compositionally biased toward low complexity: residues 21-34 (AAVDTPAAKPAKAP) and 123-132 (AKAPAAVKPK). 2 disordered regions span residues 21–57 (AAVDTPAAKPAKAPKAAKAKKSTPGPKKPRVTPAHPS) and 123–238 (AKAP…KAKK). In terms of domain architecture, H15 spans 54–124 (AHPSYAEMVS…KVKGSYKLAK (71 aa)). The segment covering 133-197 (TATKKKPAAK…AAKPKAKAAA (65 aa)) has biased composition (basic residues). 2 stretches are compositionally biased toward low complexity: residues 198–208 (KKAPAAATPKK) and 217–230 (KRATPVKKAAPAKK).

It belongs to the histone H1/H5 family.

The protein resides in the nucleus. It localises to the chromosome. In terms of biological role, histones H1 are necessary for the condensation of nucleosome chains into higher-order structures. This Triticum aestivum (Wheat) protein is Histone H1.